A 55-amino-acid chain; its full sequence is UPF0391 membrane protein Neut_2351/Neut_2360 (55 aa).

2 helical membrane passes run 4–24 (LAVV…TGVA) and 28–48 (AEMA…FWVL).

It belongs to the UPF0391 family.

It is found in the cell membrane. The polypeptide is UPF0391 membrane protein Neut_2351/Neut_2360 (Nitrosomonas eutropha (strain DSM 101675 / C91 / Nm57)).